The sequence spans 534 residues: Bifunctional pantoate ligase/cytidylate kinase (534 aa).

Positions 1 to 302 are pantoate--beta-alanine ligase; it reads MRLLTTVAAL…LGSTRLIDNT (302 aa). 48–55 provides a ligand contact to ATP; the sequence is MGSLHQGH. His55 functions as the Proton donor in the catalytic mechanism. (R)-pantoate is bound at residue Gln79. Gln79 contributes to the beta-alanine binding site. 172-175 provides a ligand contact to ATP; that stretch reads GQKD. Gln178 is a (R)-pantoate binding site. Residues Val201 and 209–212 contribute to the ATP site; that span reads CSSR. The interval 303–534 is cytidylate kinase; that stretch reads ILRDRQPIIA…DYYQQRLSQW (232 aa).

The protein in the N-terminal section; belongs to the pantothenate synthetase family. In the C-terminal section; belongs to the cytidylate kinase family. Type 1 subfamily.

Its subcellular location is the cytoplasm. The enzyme catalyses (R)-pantoate + beta-alanine + ATP = (R)-pantothenate + AMP + diphosphate + H(+). The catalysed reaction is CMP + ATP = CDP + ADP. It carries out the reaction dCMP + ATP = dCDP + ADP. The protein operates within cofactor biosynthesis; (R)-pantothenate biosynthesis; (R)-pantothenate from (R)-pantoate and beta-alanine: step 1/1. Catalyzes the condensation of pantoate with beta-alanine in an ATP-dependent reaction via a pantoyl-adenylate intermediate. In terms of biological role, catalyzes the transfer of a phosphate group from ATP to either CMP or dCMP to form CDP or dCDP and ADP, respectively. The protein is Bifunctional pantoate ligase/cytidylate kinase of Trichormus variabilis (strain ATCC 29413 / PCC 7937) (Anabaena variabilis).